Consider the following 23-residue polypeptide: Caerin-4.3 (23 aa).

In terms of tissue distribution, expressed by the skin parotoid and/or rostral glands.

Its subcellular location is the secreted. In terms of biological role, antibacterial peptide, that adopts an alpha helical conformation which can disrupt bacterial membranes. Each caerin displays a different antimicrobial specificity. In Ranoidea caerulea (Green tree frog), this protein is Caerin-4.3.